We begin with the raw amino-acid sequence, 580 residues long: Protein O-linked-mannose beta-1,4-N-acetylglucosaminyltransferase 2 (580 aa).

The Cytoplasmic portion of the chain corresponds to 1-4 (MHLS). The helical; Signal-anchor for type II membrane protein transmembrane segment at 5–25 (AVLNALLVSVLAAVLWKHVRL) threads the bilayer. The Lumenal portion of the chain corresponds to 26 to 580 (REHAAALEEE…PFADVLVCNT (555 aa)). Residues Asn99 and Asn276 are each glycosylated (N-linked (GlcNAc...) asparagine). Positions 488–580 (ARCQASVQGA…PFADVLVCNT (93 aa)) constitute a Fibronectin type-III domain.

It belongs to the glycosyltransferase 61 family.

The protein resides in the endoplasmic reticulum membrane. The catalysed reaction is 3-O-(alpha-D-mannosyl)-L-threonyl-[protein] + UDP-N-acetyl-alpha-D-glucosamine = 3-O-(N-acetyl-beta-D-glucosaminyl-(1-&gt;4)-alpha-D-mannosyl)-L-threonyl-[protein] + UDP + H(+). It functions in the pathway protein modification; protein glycosylation. Its function is as follows. O-linked mannose beta-1,4-N-acetylglucosaminyltransferase that transfers UDP-N-acetyl-D-glucosamine to the 4-position of the mannose to generate N-acetyl-D-glucosamine-beta-1,4-O-D-mannosylprotein. Involved in the biosynthesis of the phosphorylated O-mannosyl trisaccharide (N-acetylgalactosamine-beta-3-N-acetylglucosamine-beta-4-(phosphate-6-)mannose), a carbohydrate structure present in alpha-dystroglycan (DAG1), which is required for binding laminin G-like domain-containing extracellular proteins with high affinity. This is Protein O-linked-mannose beta-1,4-N-acetylglucosaminyltransferase 2 (POMGNT2) from Canis lupus familiaris (Dog).